We begin with the raw amino-acid sequence, 156 residues long: Cyanate hydratase (156 aa).

Catalysis depends on residues R96, E99, and S122.

It belongs to the cyanase family.

The catalysed reaction is cyanate + hydrogencarbonate + 3 H(+) = NH4(+) + 2 CO2. Functionally, catalyzes the reaction of cyanate with bicarbonate to produce ammonia and carbon dioxide. The chain is Cyanate hydratase from Escherichia coli O9:H4 (strain HS).